A 363-amino-acid polypeptide reads, in one-letter code: Flagellar P-ring protein 2 (363 aa).

A signal peptide spans 1–20 (MKLRTCCISLMLLLALPLQA).

The protein belongs to the FlgI family. In terms of assembly, the basal body constitutes a major portion of the flagellar organelle and consists of four rings (L,P,S, and M) mounted on a central rod.

The protein resides in the periplasm. It localises to the bacterial flagellum basal body. Functionally, assembles around the rod to form the L-ring and probably protects the motor/basal body from shearing forces during rotation. The polypeptide is Flagellar P-ring protein 2 (Photobacterium profundum (strain SS9)).